Consider the following 224-residue polypeptide: Thiamine-phosphate synthase (224 aa).

Residues 44–48 (QFREK) and N79 contribute to the 4-amino-2-methyl-5-(diphosphooxymethyl)pyrimidine site. Residues D80 and D99 each contribute to the Mg(2+) site. Residue S117 coordinates 4-amino-2-methyl-5-(diphosphooxymethyl)pyrimidine. 143-145 (TET) lines the 2-[(2R,5Z)-2-carboxy-4-methylthiazol-5(2H)-ylidene]ethyl phosphate pocket. K146 is a binding site for 4-amino-2-methyl-5-(diphosphooxymethyl)pyrimidine. 2-[(2R,5Z)-2-carboxy-4-methylthiazol-5(2H)-ylidene]ethyl phosphate contacts are provided by residues G175 and 195-196 (IS).

It belongs to the thiamine-phosphate synthase family. It depends on Mg(2+) as a cofactor.

It catalyses the reaction 2-[(2R,5Z)-2-carboxy-4-methylthiazol-5(2H)-ylidene]ethyl phosphate + 4-amino-2-methyl-5-(diphosphooxymethyl)pyrimidine + 2 H(+) = thiamine phosphate + CO2 + diphosphate. It carries out the reaction 2-(2-carboxy-4-methylthiazol-5-yl)ethyl phosphate + 4-amino-2-methyl-5-(diphosphooxymethyl)pyrimidine + 2 H(+) = thiamine phosphate + CO2 + diphosphate. The enzyme catalyses 4-methyl-5-(2-phosphooxyethyl)-thiazole + 4-amino-2-methyl-5-(diphosphooxymethyl)pyrimidine + H(+) = thiamine phosphate + diphosphate. It functions in the pathway cofactor biosynthesis; thiamine diphosphate biosynthesis; thiamine phosphate from 4-amino-2-methyl-5-diphosphomethylpyrimidine and 4-methyl-5-(2-phosphoethyl)-thiazole: step 1/1. In terms of biological role, condenses 4-methyl-5-(beta-hydroxyethyl)thiazole monophosphate (THZ-P) and 2-methyl-4-amino-5-hydroxymethyl pyrimidine pyrophosphate (HMP-PP) to form thiamine monophosphate (TMP). The protein is Thiamine-phosphate synthase of Bacillus licheniformis (strain ATCC 14580 / DSM 13 / JCM 2505 / CCUG 7422 / NBRC 12200 / NCIMB 9375 / NCTC 10341 / NRRL NRS-1264 / Gibson 46).